Here is a 168-residue protein sequence, read N- to C-terminus: Phosphopantetheine adenylyltransferase (168 aa).

Substrate is bound at residue Thr11. Residues 11–12 and His19 contribute to the ATP site; that span reads TF. Residues Lys43, Thr75, and Arg89 each coordinate substrate. Residues 90–92, Glu100, and 125–131 contribute to the ATP site; these read GIR and WSYMSSS.

It belongs to the bacterial CoaD family. As to quaternary structure, homohexamer. Mg(2+) is required as a cofactor.

The protein localises to the cytoplasm. The catalysed reaction is (R)-4'-phosphopantetheine + ATP + H(+) = 3'-dephospho-CoA + diphosphate. Its pathway is cofactor biosynthesis; coenzyme A biosynthesis; CoA from (R)-pantothenate: step 4/5. Its function is as follows. Reversibly transfers an adenylyl group from ATP to 4'-phosphopantetheine, yielding dephospho-CoA (dPCoA) and pyrophosphate. In Wigglesworthia glossinidia brevipalpis, this protein is Phosphopantetheine adenylyltransferase.